We begin with the raw amino-acid sequence, 431 residues long: Saglin (431 aa).

The signal sequence occupies residues 1 to 39; it reads MSVRGYSGVQVISSRKHRSMSRLPTVLLLLASAAVLAAG. N95 carries an N-linked (GlcNAc...) asparagine glycan. Residues 120–169 are a coiled coil; that stretch reads LDDAQRQMEQEHRQYAATLEEQLHAAQQETQQEQEMKKALQKQLDALTDS.

As to quaternary structure, homodimer; disulfide-linked. (Microbial infection) Interacts with Plasmodium berghei TRAP (via integrin-like A-domain); the interaction probably promotes sporozoite invasion of salivary gland. Female saliva (at protein level). Female salivary gland (at protein level).

It is found in the secreted. Functionally, (Microbial infection) Facilitates invasion of mosquito salivary glands by Plasmodium yoelii sporozoites. (Microbial infection) Facilitates invasion of mosquito salivary glands by Plasmodium falciparum sporozoites. In terms of biological role, (Microbial infection) Probably facilitates invasion of mosquito salivary glands by Plasmodium berghei sporozoites. This chain is Saglin, found in Anopheles gambiae (African malaria mosquito).